Here is a 291-residue protein sequence, read N- to C-terminus: ATP synthase gamma chain (291 aa).

The protein belongs to the ATPase gamma chain family. As to quaternary structure, F-type ATPases have 2 components, CF(1) - the catalytic core - and CF(0) - the membrane proton channel. CF(1) has five subunits: alpha(3), beta(3), gamma(1), delta(1), epsilon(1). CF(0) has three main subunits: a, b and c.

The protein resides in the cell inner membrane. Produces ATP from ADP in the presence of a proton gradient across the membrane. The gamma chain is believed to be important in regulating ATPase activity and the flow of protons through the CF(0) complex. This chain is ATP synthase gamma chain, found in Burkholderia ambifaria (strain MC40-6).